The chain runs to 327 residues: Malate dehydrogenase (327 aa).

An NAD(+)-binding site is contributed by 11 to 17 (GAAGQIS). Residues R92 and R98 each coordinate substrate. NAD(+)-binding positions include N105, Q112, and 129 to 131 (VGN). Substrate-binding residues include N131 and R162. The Proton acceptor role is filled by H187.

The protein belongs to the LDH/MDH superfamily. MDH type 2 family.

The catalysed reaction is (S)-malate + NAD(+) = oxaloacetate + NADH + H(+). Catalyzes the reversible oxidation of malate to oxaloacetate. This is Malate dehydrogenase from Nitrosomonas europaea (strain ATCC 19718 / CIP 103999 / KCTC 2705 / NBRC 14298).